Reading from the N-terminus, the 928-residue chain is MVLVLHHILIAVVQFLRRGQQVFLKPDEPPPQPCADSLQDALLSLGAVIDIAGLRQAAKDALSAVLPKVETVYTYLVDGESRLVCEDPPHELPQEGKIREAVISRKRLSCDGLGPSDLLGKPLARLVAPLAPDTQVLVIPLLDKETGTVAAVILVHCGQLSDSEEQSLQVVEKHALVALQRVQALQQRRPEAVQNTSADPSEDQKDEKGYTAHDRKILQLCGELYDLDATSLQLKVLRYLQQETQATHCCLLLVSEDNLQLSCKVIGEKVLGEEVSFPLTMGRLGQVVEDKQCIQLKDLTSDDVQQLQNMLGCELRAMLCVPVISRATDQVVALACAFNKLGGDFFTDEDERAIQHCFHYTGTVLTSTLAFQKEQKLKCECQALLQVAKNLFTHLDDVSVLLQEIITEARNLSNAEICSVFLLDQNELVAKVFDGGVVDDESYEIRIPADQGIAGHVATTGQILNIPDAYAHPLFYRGVDDSTGFRTRNILCFPIKNENQEVIGVAELVNKINGPWFSKFDEDLATAFSIYCGISIAHSLLYKKVNEAQYRSHLANEMMMYHMKVSDDEYTKLLHDGIQPVAAIDSNFANFTYTPRSLPEDDTSMAILSMLQDMNFINNYKIDCPTLARFCLMVKKGYRDPPYHNWMHAFSVSHFCYLLYKNLELSNYLEDIEIFALFISCMCHDLDHRGTNNSFQVASKSVLAALYSSEGSVMERHHFAQAIAILNTHGCNIFDHFSRKDYQRMLDLMRDIILATDLAHHLRIFKDLQKMAEVGYDRNNKQHHRLLLCLLMTSCDLSDQTKGWKTTRKIAELIYKEFFSQGDLEKAMGNRPMEMMDREKAYIPELQISFMEHIAMPIYKLLQDLFPKAAELYERVASNREHWTKVSHKFTIRGLPSNNSLDFLDEEYEVPDLDVTRAPVNGCCSLEG.

Serine 109 bears the Phosphoserine mark. The interval 188 to 210 (RRPEAVQNTSADPSEDQKDEKGY) is disordered. GAF domains are found at residues 228–365 (DATS…GTVL) and 397–536 (DVSV…GISI). 3',5'-cyclic GMP contacts are provided by serine 419, aspartate 434, isoleucine 453, tyrosine 476, and threonine 487. The PDEase domain maps to 566-890 (SDDEYTKLLH…EHWTKVSHKF (325 aa)). The Proton donor role is filled by histidine 644. Residues histidine 648, histidine 684, aspartate 685, and aspartate 796 each coordinate Zn(2+). Aspartate 685 serves as a coordination point for Mg(2+).

Belongs to the cyclic nucleotide phosphodiesterase family. PDE2 subfamily. Homodimer. It depends on Zn(2+) as a cofactor. Requires Mg(2+) as cofactor. Expressed in brain and liver.

Its subcellular location is the cell membrane. The protein localises to the cytoplasm. The protein resides in the mitochondrion matrix. It is found in the mitochondrion inner membrane. It localises to the mitochondrion outer membrane. The catalysed reaction is a nucleoside 3',5'-cyclic phosphate + H2O = a nucleoside 5'-phosphate + H(+). It catalyses the reaction 3',5'-cyclic GMP + H2O = GMP + H(+). The enzyme catalyses 3',5'-cyclic AMP + H2O = AMP + H(+). With respect to regulation, the 3',5'-cyclic-AMP phosphodiesterase activity is stimulated by 3',5'-cyclic GMP. Specifically inhibited by Bay 60-7550. When repressed, protected from ionomycin- but not staurosporin-induced cell death. CGMP-activated cyclic nucleotide phosphodiesterase with a dual-specificity for the second messengers cAMP and cGMP, which are key regulators of many important physiological processes. Has a higher efficiency with cGMP compared to cAMP. Plays a role in cell growth and migration. In terms of biological role, regulates mitochondrial cAMP levels and respiration. Involved in the regulation of mitochondria morphology/dynamics and apoptotic cell death via local modulation of cAMP/PKA signaling in the mitochondrion, including the monitoring of local cAMP levels at the outer mitochondrial membrane and of PKA-dependent phosphorylation of Dnm1l. This chain is cGMP-dependent 3',5'-cyclic phosphodiesterase, found in Rattus norvegicus (Rat).